A 31-amino-acid chain; its full sequence is Cyclotide cter-J (31 aa).

A cross-link (cyclopeptide (Gly-Asp)) is located at residues Gly-1–Asp-31. Cystine bridges form between Cys-5/Cys-21, Cys-9/Cys-23, and Cys-14/Cys-28.

Post-translationally, contains 3 disulfide bonds. This is a cyclic peptide.

Functionally, probably participates in a plant defense mechanism. The polypeptide is Cyclotide cter-J (Clitoria ternatea (Butterfly pea)).